The primary structure comprises 170 residues: MENIVLIGMPLSGKSTLGRELSKILKYDLIDTDTLIEEMEDKSIKEIFKIYGEDYFREKELKIINKLKKESNKVISTGGGLPIYNKNIYELKKIGFTVYLKVPLEELIKRMVKKEYDTRPLLKNNDTKFLEEMYKNRIEIYEKAHTIICNTNYKESLITIVRAYKKWKGI.

11–16 is an ATP binding site; sequence LSGKST. Serine 15 provides a ligand contact to Mg(2+). Aspartate 33, arginine 57, and glycine 79 together coordinate substrate. Arginine 119 provides a ligand contact to ATP. Position 137 (arginine 137) interacts with substrate.

Belongs to the shikimate kinase family. Monomer. Mg(2+) is required as a cofactor.

The protein resides in the cytoplasm. It catalyses the reaction shikimate + ATP = 3-phosphoshikimate + ADP + H(+). Its pathway is metabolic intermediate biosynthesis; chorismate biosynthesis; chorismate from D-erythrose 4-phosphate and phosphoenolpyruvate: step 5/7. Catalyzes the specific phosphorylation of the 3-hydroxyl group of shikimic acid using ATP as a cosubstrate. This is Shikimate kinase from Clostridium botulinum (strain ATCC 19397 / Type A).